A 664-amino-acid chain; its full sequence is Armadillo repeat protein involved in nucleocytoplasmic transport Syo2 (664 aa).

An ARM repeat occupies 77 to 119 (GLVSKLIDRISDDSVEVVVEATGALRNLAIEEGYSICMDMYRK).

This sequence belongs to the nuclear import and ribosome assembly adapter family. As to quaternary structure, forms a heterotrimeric complex with rpl5 and rpl11a or rpl11b; interaction of this complex with kap104 allows the nuclear import of the heterotrimer. Component of a hexameric 5S RNP precursor complex; this complex acts as a precursor for ribosome assembly.

It localises to the cytoplasm. The protein localises to the nucleus. Nuclear import adapter that specifically recruits the two functionally and topologically linked ribosomal proteins rpl5 and rpl11 (encoded by rpl11a and rpl11b). Guarantees that this cargo pair remains bound together from the time of synthesis in the cytoplasm until delivery to the nascent 5S rRNA in the nucleus. The chain is Armadillo repeat protein involved in nucleocytoplasmic transport Syo2 from Schizosaccharomyces pombe (strain 972 / ATCC 24843) (Fission yeast).